A 243-amino-acid polypeptide reads, in one-letter code: Small ribosomal subunit protein uS3 (243 aa).

Ala-2 is subject to N-acetylalanine. Ser-6 carries the post-translational modification Phosphoserine; by PKC/PRKCD. The KH type-2 domain occupies 21 to 92 (LNEFLTRELA…SVELYAEKVA (72 aa)). Ser-35 is subject to Phosphoserine. Thr-42 carries the post-translational modification Phosphothreonine; by MAPK. Lys-62 carries the N6-acetyllysine modification. Arg-64, Arg-65, and Arg-67 each carry asymmetric dimethylarginine; by PRMT1. Thr-70 bears the Phosphothreonine; by PKB mark. Lys-90 participates in a covalent cross-link: Glycyl lysine isopeptide (Lys-Gly) (interchain with G-Cter in ubiquitin). A Phosphoserine modification is found at Ser-104. Lys-132 carries the N6-succinyllysine modification. A Glycyl lysine isopeptide (Lys-Gly) (interchain with G-Cter in ubiquitin) cross-link involves residue Lys-202. At Ser-209 the chain carries Phosphoserine; by IKKB. A Glycyl lysine isopeptide (Lys-Gly) (interchain with G-Cter in SUMO2); alternate cross-link involves residue Lys-214. A Glycyl lysine isopeptide (Lys-Gly) (interchain with G-Cter in ubiquitin); alternate cross-link involves residue Lys-214. The tract at residues 214-243 (KDEILPTTPISEQKGGKPEPPAMPQPVPTA) is disordered. Position 220 is a phosphothreonine (Thr-220). Residue Thr-221 is modified to Phosphothreonine; by CDK1 and PKC/PRKCD. The residue at position 224 (Ser-224) is a Phosphoserine. Lys-230 participates in a covalent cross-link: Glycyl lysine isopeptide (Lys-Gly) (interchain with G-Cter in SUMO2). Residues 231–243 (PEPPAMPQPVPTA) are compositionally biased toward pro residues. Phosphothreonine is present on Thr-242.

Belongs to the universal ribosomal protein uS3 family. As to quaternary structure, component of the 40S small ribosomal subunit. Identified in a IGF2BP1-dependent mRNP granule complex containing untranslated mRNAs. Interacts with HNRPD. Interacts with PRMT1; the interaction methylates RPS3. Interacts with SUMO1; the interaction sumoylates RPS3. Interacts with UBC9. Interacts with CDK1; the interaction phosphorylates RPS3. Interacts with PRKCD; the interaction phosphorylates RPS3. Interacts with PKB/AKT; the interaction phosphorylates RPS3. Interacts with E2F1; the interaction occurs in the absence of nerve growth factor and increases transcription of pro-apoptotic proteins BCL2L11/BIM and HRK/Dp5. Interacts with the base excision repair proteins APEX1 and OGG1; interaction with OGG1 increases OGG1 N-glycosylase activity. Interacts with UNG; the interaction increases the uracil excision activity of UNG1. Interacts with HSP90; the interaction prevents the ubiquitination and proteasome-dependent degradation of RPS3 and is suppressed by increased ROS levels. Interacts with TOM70; the interaction promotes translocation of RPS3 to the mitochondrion. Interacts (via N-terminus) with RELA (via N-terminus); the interaction enhances the DNA-binding activity of the NF-kappa-B p65-p50 complex. Interacts with NFKBIA; the interaction is direct and may bridge the interaction between RPS3 and RELA. Interacts with IKKB; the interaction phosphorylates RPS3 and enhances its translocation to the nucleus. Interacts (via KH domain) with MDM2 and TP53. Interacts with TRADD. Interacts with CRY1. Methylation by PRMT1 is required for import into the nucleolus and for ribosome assembly. In terms of processing, sumoylation by SUMO1 enhances protein stability through increased resistance to proteolysis. Sumoylation occurs at one or more of the three consensus sites, Lys-18, Lys-214 and Lys-230. Post-translationally, phosphorylation at Thr-221 by CDK1 occurs mainly in G2/M phase. Phosphorylation by PRKCD occurs on a non-ribosomal-associated form which results in translocation of RPS3 to the nucleus and enhances its endonuclease activity. Phosphorylated on Ser-209 by IKKB in response to activation of the NF-kappa-B p65-p50 complex which enhances the association of RPS3 with importin-alpha and mediates the nuclear translocation of RPS3. Phosphorylation by MAPK is required for translocation to the nucleus following exposure of cells to DNA damaging agents such as hydrogen peroxide. Phosphorylation by PKB/AKT mediates RPS3 nuclear translocation, enhances RPS3 endonuclease activity and suppresses RPS3-induced neuronal apoptosis. Ubiquitinated; ubiquitination is prevented by interaction with HSP90 which stabilizes the protein. Monoubiquitinated at Lys-214 by RNF10 and ZNF598 when a ribosome has stalled during translation of poly(A) sequences, leading to preclude synthesis of a long poly-lysine tail and initiate the ribosome quality control (RQC) pathway to degrade the potentially detrimental aberrant nascent polypeptide. Deubiquitinated at Lys-214 by USP10, preventing degradation by the proteasome and promoting 40S ribosome subunit recycling following ribosome dissociation. In terms of processing, ufmylated by UFL1.

Its subcellular location is the cytoplasm. It is found in the nucleus. It localises to the nucleolus. The protein resides in the mitochondrion inner membrane. The protein localises to the cytoskeleton. Its subcellular location is the spindle. The catalysed reaction is 2'-deoxyribonucleotide-(2'-deoxyribose 5'-phosphate)-2'-deoxyribonucleotide-DNA = a 3'-end 2'-deoxyribonucleotide-(2,3-dehydro-2,3-deoxyribose 5'-phosphate)-DNA + a 5'-end 5'-phospho-2'-deoxyribonucleoside-DNA + H(+). Its function is as follows. Component of the small ribosomal subunit. The ribosome is a large ribonucleoprotein complex responsible for the synthesis of proteins in the cell. Has endonuclease activity and plays a role in repair of damaged DNA. Cleaves phosphodiester bonds of DNAs containing altered bases with broad specificity and cleaves supercoiled DNA more efficiently than relaxed DNA. Displays high binding affinity for 7,8-dihydro-8-oxoguanine (8-oxoG), a common DNA lesion caused by reactive oxygen species (ROS). Has also been shown to bind with similar affinity to intact and damaged DNA. Stimulates the N-glycosylase activity of the base excision protein OGG1. Enhances the uracil excision activity of UNG1. Also stimulates the cleavage of the phosphodiester backbone by APEX1. When located in the mitochondrion, reduces cellular ROS levels and mitochondrial DNA damage. Has also been shown to negatively regulate DNA repair in cells exposed to hydrogen peroxide. Plays a role in regulating transcription as part of the NF-kappa-B p65-p50 complex where it binds to the RELA/p65 subunit, enhances binding of the complex to DNA and promotes transcription of target genes. Represses its own translation by binding to its cognate mRNA. Binds to and protects TP53/p53 from MDM2-mediated ubiquitination. Involved in spindle formation and chromosome movement during mitosis by regulating microtubule polymerization. Involved in induction of apoptosis through its role in activation of CASP8. Induces neuronal apoptosis by interacting with the E2F1 transcription factor and acting synergistically with it to up-regulate pro-apoptotic proteins BCL2L11/BIM and HRK/Dp5. Interacts with TRADD following exposure to UV radiation and induces apoptosis by caspase-dependent JNK activation. This chain is Small ribosomal subunit protein uS3 (RPS3), found in Bos taurus (Bovine).